The chain runs to 313 residues: Hydroxyacylglutathione hydrolase, mitochondrial (313 aa).

Residues His-107, His-109, Asp-111, His-112, His-163, and Asp-187 each contribute to the Zn(2+) site. Residues 196-198 (KFF) and 226-228 (HEY) contribute to the substrate site. His-226 contacts Zn(2+). 2 stretches are compositionally biased toward basic and acidic residues: residues 285–294 (VQEHAGERDP) and 301–313 (IRKE…VPKD). A disordered region spans residues 285–313 (VQEHAGERDPISTMGAIRKEKDHFKVPKD). A substrate-binding site is contributed by 302–305 (RKEK).

The protein belongs to the metallo-beta-lactamase superfamily. Glyoxalase II family. As to quaternary structure, monomer. Zn(2+) serves as cofactor.

The protein resides in the mitochondrion matrix. It localises to the cytoplasm. It carries out the reaction an S-(2-hydroxyacyl)glutathione + H2O = a 2-hydroxy carboxylate + glutathione + H(+). The enzyme catalyses (R)-S-lactoylglutathione + H2O = (R)-lactate + glutathione + H(+). Its function is as follows. Thiolesterase that catalyzes the hydrolysis of S-D-lactoyl-glutathione to form glutathione and D-lactic acid. The chain is Hydroxyacylglutathione hydrolase, mitochondrial (hagh) from Xenopus tropicalis (Western clawed frog).